The primary structure comprises 241 residues: Phosphoribosylaminoimidazole-succinocarboxamide synthase (241 aa).

This sequence belongs to the SAICAR synthetase family.

The catalysed reaction is 5-amino-1-(5-phospho-D-ribosyl)imidazole-4-carboxylate + L-aspartate + ATP = (2S)-2-[5-amino-1-(5-phospho-beta-D-ribosyl)imidazole-4-carboxamido]succinate + ADP + phosphate + 2 H(+). It functions in the pathway purine metabolism; IMP biosynthesis via de novo pathway; 5-amino-1-(5-phospho-D-ribosyl)imidazole-4-carboxamide from 5-amino-1-(5-phospho-D-ribosyl)imidazole-4-carboxylate: step 1/2. The sequence is that of Phosphoribosylaminoimidazole-succinocarboxamide synthase from Oenococcus oeni (strain ATCC BAA-331 / PSU-1).